The primary structure comprises 129 residues: MIFDFPKKFRFADSHEYACPEGDLVRIGISAFAVDQLGDIVFVDLPGIGTLLEQGISFGSVESVKAVEDMNAPIGGEVLQINESVLNSPEELQNDPHGEGWLLLVKPSDASQLDKLMSSEIYSEKVSSK.

The Lipoyl-binding domain maps to 24 to 106 (LVRIGISAFA…HGEGWLLLVK (83 aa)). Lysine 65 carries the N6-lipoyllysine modification.

Belongs to the GcvH family. In terms of assembly, the glycine cleavage system is composed of four proteins: P, T, L and H. It depends on (R)-lipoate as a cofactor.

Functionally, the glycine cleavage system catalyzes the degradation of glycine. The H protein shuttles the methylamine group of glycine from the P protein to the T protein. This chain is Glycine cleavage system H protein, found in Prochlorococcus marinus (strain SARG / CCMP1375 / SS120).